Reading from the N-terminus, the 197-residue chain is Adenylyl-sulfate kinase (197 aa).

33–40 (GLSGSGKS) contributes to the ATP binding site. Catalysis depends on Ser-107, which acts as the Phosphoserine intermediate.

This sequence belongs to the APS kinase family.

The enzyme catalyses adenosine 5'-phosphosulfate + ATP = 3'-phosphoadenylyl sulfate + ADP + H(+). The protein operates within sulfur metabolism; hydrogen sulfide biosynthesis; sulfite from sulfate: step 2/3. Catalyzes the synthesis of activated sulfate. In Bacillus pumilus (strain SAFR-032), this protein is Adenylyl-sulfate kinase.